Here is a 486-residue protein sequence, read N- to C-terminus: Protein nucleotidyltransferase YdiU (486 aa).

8 residues coordinate ATP: Gly90, Gly92, Arg93, Lys113, Asp125, Gly126, Arg176, and Arg183. Asp252 acts as the Proton acceptor in catalysis. Residues Asn253 and Asp262 each coordinate Mg(2+). Asp262 contacts ATP.

This sequence belongs to the SELO family. Mg(2+) is required as a cofactor. It depends on Mn(2+) as a cofactor.

It catalyses the reaction L-seryl-[protein] + ATP = 3-O-(5'-adenylyl)-L-seryl-[protein] + diphosphate. The enzyme catalyses L-threonyl-[protein] + ATP = 3-O-(5'-adenylyl)-L-threonyl-[protein] + diphosphate. The catalysed reaction is L-tyrosyl-[protein] + ATP = O-(5'-adenylyl)-L-tyrosyl-[protein] + diphosphate. It carries out the reaction L-histidyl-[protein] + UTP = N(tele)-(5'-uridylyl)-L-histidyl-[protein] + diphosphate. It catalyses the reaction L-seryl-[protein] + UTP = O-(5'-uridylyl)-L-seryl-[protein] + diphosphate. The enzyme catalyses L-tyrosyl-[protein] + UTP = O-(5'-uridylyl)-L-tyrosyl-[protein] + diphosphate. Nucleotidyltransferase involved in the post-translational modification of proteins. It can catalyze the addition of adenosine monophosphate (AMP) or uridine monophosphate (UMP) to a protein, resulting in modifications known as AMPylation and UMPylation. In Pseudomonas paraeruginosa (strain DSM 24068 / PA7) (Pseudomonas aeruginosa (strain PA7)), this protein is Protein nucleotidyltransferase YdiU.